The primary structure comprises 383 residues: Dynein axonemal assembly factor 11 (383 aa).

LRR repeat units lie at residues 20–45, 46–66, 67–89, and 90–110; these read LSNLKEVALHQQDIERIELIGDACRE, LEILYLCNNYISRIEGLQHLK, YLKYLNLAVNNITYIEGLEGCEA, and LERLDLTLNFVADVTCVERLR. An LRRCT domain is found at 128–146; the sequence is VAGYRAYVVHALPQLRELD. The segment at 201-244 is disordered; that stretch reads KGERLYGHTPEERLQMLREKEEEERRKREEQRERERSSQFGAIR. Residues 211–239 are a coiled coil; the sequence is EERLQMLREKEEEERRKREEQRERERSSQ.

This sequence belongs to the tilB family.

Its subcellular location is the cytoplasm. It is found in the cytoskeleton. The protein resides in the flagellum basal body. Its function is as follows. Involved in the regulation of the cell cycle; is required for the basal body replication and new flagellum biogenesis. This Trypanosoma brucei brucei protein is Dynein axonemal assembly factor 11 (dnaaf11).